Here is a 160-residue protein sequence, read N- to C-terminus: Glucan endo-1,3-beta-glucosidase, acidic isoform PR-O (160 aa).

Residue Glu81 is the Nucleophile of the active site.

Belongs to the glycosyl hydrolase 17 family. The N-terminus is blocked.

Its subcellular location is the secreted. It is found in the extracellular space. It catalyses the reaction Hydrolysis of (1-&gt;3)-beta-D-glucosidic linkages in (1-&gt;3)-beta-D-glucans.. Its function is as follows. Implicated in the defense of plants against pathogens. The protein is Glucan endo-1,3-beta-glucosidase, acidic isoform PR-O (PR0) of Nicotiana tabacum (Common tobacco).